The chain runs to 178 residues: 6,7-dimethyl-8-ribityllumazine synthase (178 aa).

5-amino-6-(D-ribitylamino)uracil-binding positions include F23, 61–63 (SFE), and 85–87 (AVI). 90-91 (QT) contacts (2S)-2-hydroxy-3-oxobutyl phosphate. Catalysis depends on H93, which acts as the Proton donor. Y118 provides a ligand contact to 5-amino-6-(D-ribitylamino)uracil. Residue R132 participates in (2S)-2-hydroxy-3-oxobutyl phosphate binding.

It belongs to the DMRL synthase family.

It carries out the reaction (2S)-2-hydroxy-3-oxobutyl phosphate + 5-amino-6-(D-ribitylamino)uracil = 6,7-dimethyl-8-(1-D-ribityl)lumazine + phosphate + 2 H2O + H(+). Its pathway is cofactor biosynthesis; riboflavin biosynthesis; riboflavin from 2-hydroxy-3-oxobutyl phosphate and 5-amino-6-(D-ribitylamino)uracil: step 1/2. Functionally, catalyzes the formation of 6,7-dimethyl-8-ribityllumazine by condensation of 5-amino-6-(D-ribitylamino)uracil with 3,4-dihydroxy-2-butanone 4-phosphate. This is the penultimate step in the biosynthesis of riboflavin. The chain is 6,7-dimethyl-8-ribityllumazine synthase from Thermosynechococcus vestitus (strain NIES-2133 / IAM M-273 / BP-1).